Reading from the N-terminus, the 443-residue chain is Chromosomal replication initiator protein DnaA (443 aa).

Residues 1-67 (MDAWSRSLER…RELLAHFAGF (67 aa)) form a domain I, interacts with DnaA modulators region. The interval 67 to 105 (FSDVFLEIGSRPRPVEAQNAPFSTPSAHVSSEPQVPFAG) is domain II. Positions 106-323 (NLDNHYTFAN…GALNTLTARA (218 aa)) are domain III, AAA+ region. Positions 151, 153, 154, and 155 each coordinate ATP. Positions 324–443 (NFTGRAITTE…WDKLIRKLSE (120 aa)) are domain IV, binds dsDNA.

Belongs to the DnaA family. In terms of assembly, oligomerizes as a right-handed, spiral filament on DNA at oriC.

Its subcellular location is the cytoplasm. Functionally, plays an essential role in the initiation and regulation of chromosomal replication. ATP-DnaA binds to the origin of replication (oriC) to initiate formation of the DNA replication initiation complex once per cell cycle. Binds the DnaA box (a 9 base pair repeat at the origin) and separates the double-stranded (ds)DNA. Forms a right-handed helical filament on oriC DNA; dsDNA binds to the exterior of the filament while single-stranded (ss)DNA is stabiized in the filament's interior. The ATP-DnaA-oriC complex binds and stabilizes one strand of the AT-rich DNA unwinding element (DUE), permitting loading of DNA polymerase. After initiation quickly degrades to an ADP-DnaA complex that is not apt for DNA replication. Binds acidic phospholipids. This is Chromosomal replication initiator protein DnaA from Stenotrophomonas maltophilia (strain R551-3).